The primary structure comprises 124 residues: Small ribosomal subunit protein uS12 (124 aa).

Asp89 is modified (3-methylthioaspartic acid).

It belongs to the universal ribosomal protein uS12 family. As to quaternary structure, part of the 30S ribosomal subunit. Contacts proteins S8 and S17. May interact with IF1 in the 30S initiation complex.

Its function is as follows. With S4 and S5 plays an important role in translational accuracy. Interacts with and stabilizes bases of the 16S rRNA that are involved in tRNA selection in the A site and with the mRNA backbone. Located at the interface of the 30S and 50S subunits, it traverses the body of the 30S subunit contacting proteins on the other side and probably holding the rRNA structure together. The combined cluster of proteins S8, S12 and S17 appears to hold together the shoulder and platform of the 30S subunit. This chain is Small ribosomal subunit protein uS12, found in Campylobacter hominis (strain ATCC BAA-381 / DSM 21671 / CCUG 45161 / LMG 19568 / NCTC 13146 / CH001A).